Reading from the N-terminus, the 312-residue chain is Malate dehydrogenase (312 aa).

Residues 7–13 and aspartate 34 each bind NAD(+); that span reads GAAGGIG. Substrate is bound by residues arginine 81 and arginine 87. NAD(+)-binding positions include asparagine 94 and 117-119; that span reads ITN. Substrate is bound by residues asparagine 119 and arginine 153. The active-site Proton acceptor is the histidine 177. An NAD(+)-binding site is contributed by methionine 227.

The protein belongs to the LDH/MDH superfamily. MDH type 1 family. As to quaternary structure, homodimer.

It carries out the reaction (S)-malate + NAD(+) = oxaloacetate + NADH + H(+). Functionally, catalyzes the reversible oxidation of malate to oxaloacetate. This Salmonella gallinarum (strain 287/91 / NCTC 13346) protein is Malate dehydrogenase.